The sequence spans 66 residues: Large ribosomal subunit protein bL33c (66 aa).

The protein belongs to the bacterial ribosomal protein bL33 family.

It localises to the plastid. The protein localises to the chloroplast. This Drimys granadensis protein is Large ribosomal subunit protein bL33c.